Reading from the N-terminus, the 2843-residue chain is Adenomatous polyposis coli protein (2843 aa).

A2 is subject to N-acetylalanine. A coiled-coil region spans residues 2–61; it reads AAASYDQLLKQVEALKMENSNLRQELEDNSNHLTKLETEASNMKEVLKQLQGSIEDEAMA. Phosphoserine occurs at positions 107 and 111. A coiled-coil region spans residues 127–248; the sequence is SRESTGYLEE…ATEAERSSQN (122 aa). The disordered stretch occupies residues 239 to 305; it reads ATEAERSSQN…STHSAPRRLT (67 aa). Basic and acidic residues predominate over residues 241–261; the sequence is EAERSSQNKHETGSHDAERQN. Positions 271 to 282 are enriched in polar residues; it reads MATSGNGQGSTT. Positions 290–299 are enriched in low complexity; the sequence is SVLSSSSTHS. ARM repeat units lie at residues 453-495, 505-547, 548-591, 592-638, 639-683, 684-725, and 726-767; these read LMKL…HYSI, LTNL…IASV, LRNL…VLSA, LWNL…GGGI, LRNV…ACGT, LWNL…SAAA, and LRNL…LDAQ. A phosphoserine mark is found at S744, S748, and S780. A disordered region spans residues 828–878; it reads TTVLPSSSSSRGSLDSSRSEKDRSLERERGIGLGNYHPATENPGTSSKRGL. The segment covering 833–843 has biased composition (low complexity); that stretch reads SSSSSRGSLDS. Residues 844 to 857 show a composition bias toward basic and acidic residues; it reads SRSEKDRSLERERG. The segment covering 869-878 has biased composition (polar residues); it reads NPGTSSKRGL. S908 bears the Phosphoserine mark. Disordered stretches follow at residues 923–943 and 958–987; these read RRSS…SENS and RSSN…ESYS. Residues 927–943 are compositionally biased toward polar residues; sequence AAHTHSNTYNFTKSENS. The responsible for down-regulation through a process mediated by direct ubiquitination stretch occupies residues 960-1337; the sequence is SNDSLNSVSS…QHPRTKSSRL (378 aa). Over residues 961–971 the composition is skewed to low complexity; sequence NDSLNSVSSSD. S987, S1038, and S1042 each carry phosphoserine. The interval 1020–1169 is interaction with catenins; it reads ELDTPINYSL…TNYSIKYNEE (150 aa). Disordered stretches follow at residues 1099 to 1169, 1190 to 1244, and 1311 to 1376; these read VSPY…YNEE, SQKQ…GQPQ, and IGTR…PEHY. Positions 1107–1130 are enriched in polar residues; it reads ANGSETNRVGSNHGINQNVSQSLC. Positions 1146 to 1159 are enriched in basic and acidic residues; the sequence is RYSEEEQHEEEERP. Residues 1190–1224 are compositionally biased toward low complexity; it reads SQKQSFSFSKSSSGQSSKTEHMSSSSENTSTPSSN. Residues 1225-1244 show a composition bias toward polar residues; the sequence is AKRQNQLHPSSAQSRSGQPQ. 2 stretches are compositionally biased toward low complexity: residues 1335–1345 and 1355–1366; these read SRLQGSSLSSE and SSGAKSPSKSGA. Residues S1360, S1371, S1385, S1392, and S1395 each carry the phosphoserine modification. Disordered regions lie at residues 1403–1475, 1526–1569, 1583–1611, 1664–1717, and 1729–1836; these read SSVQ…VNAA, PPVQ…DSDD, MPTK…KPSQ, SPPN…DDNK, and NSAM…RVRG. T1438 is subject to Phosphothreonine. 2 stretches are compositionally biased toward basic and acidic residues: residues 1448 to 1466 and 1540 to 1564; these read TKRE…RESG and EQPK…KDLL. S1567 bears the Phosphoserine mark. Basic and acidic residues predominate over residues 1683 to 1698; the sequence is EFEKRDTIPTEGRSTD. Residues 1735-1744 are compositionally biased toward basic residues; the sequence is GKSHKPFRVK. S1774 carries the phosphoserine modification. Composition is skewed to basic and acidic residues over residues 1785–1794 and 1804–1813; these read YRTRVRKNAD and VFSDNKDSKK. A phosphoserine mark is found at S1861, S1863, and S1864. Residues 1866 to 1893 form a highly charged region; the sequence is DFDDDDVDLSREKAELRKAKENKESEAK. Over residues 1881–1896 the composition is skewed to basic and acidic residues; the sequence is LRKAKENKESEAKVTS. Disordered regions lie at residues 1881–1950, 1965–2011, and 2043–2072; these read LRKA…TDEK, HNSS…APKS, and ISSA…GGIL. 2 stretches are compositionally biased toward polar residues: residues 1897 to 1913 and 1928 to 1938; these read HTEL…TQAI and QKQSTFPQSSK. Residues 1939 to 1950 are compositionally biased toward basic and acidic residues; it reads DIPDRGAATDEK. A phosphoserine mark is found at S1971 and S1973. Residues 1979 to 1991 are compositionally biased toward basic and acidic residues; it reads NNNKENEPIKETE. The interaction with AXIN1 stretch occupies residues 2035-2059; that stretch reads EDDLLQECISSAMPKKKKPSRLKGD. Phosphoserine occurs at positions 2088, 2093, 2125, 2129, 2130, and 2132. Disordered regions lie at residues 2147–2635 and 2667–2714; these read PFHL…SGAT and NNPR…VPMR. T2151 bears the Phosphothreonine mark. The segment at 2167-2674 is basic region; sequence ILKPGEKSTL…PINNPRSGRS (508 aa). Residues 2169–2187 show a composition bias toward basic and acidic residues; that stretch reads KPGEKSTLETKKIESESKG. Polar residues-rich tracts occupy residues 2203 to 2223 and 2257 to 2271; these read VRSN…NMPS and ASKS…TTSP. Phosphoserine is present on residues S2260, S2270, and S2283. The segment covering 2286–2331 has biased composition (polar residues); the sequence is ARQTSQIGGSSKAPSRSGSRDSTPSRPAQQPLSRPIQSPGRNSISP. A compositionally biased stretch (low complexity) spans 2348–2369; it reads TSSPSTASTKSSGSGKMSYTSP. Composition is skewed to polar residues over residues 2370–2409 and 2418–2427; these read GRQM…NGNG and RMSSTKSSGS. Positions 2459 to 2477 are enriched in low complexity; that stretch reads SASFESLSPSSRPASPTRS. Phosphoserine occurs at positions 2473 and 2535. Residues 2475–2843 are interaction with DLG1; sequence TRSQAQTPVL…HSGSYLVTSV (369 aa). Residues 2518–2535 show a composition bias toward basic and acidic residues; that stretch reads NDGRPAKRHDIARSHSES. Polar residues predominate over residues 2555–2568; it reads SSSLPRVSTWRRTG. Position 2569 is a phosphoserine (S2569). A compositionally biased stretch (low complexity) spans 2569–2579; it reads SSSSILSASSE. A compositionally biased stretch (basic and acidic residues) spans 2580–2592; sequence SSEKAKSEDEKHV. Polar residues-rich tracts occupy residues 2593–2608, 2620–2635, and 2668–2679; these read NSIS…QVSA, FSPT…SGAT, and NPRSGRSPTGNT. Phosphoserine occurs at positions 2671 and 2674. Positions 2674–2843 are interaction with MAPRE1; that stretch reads SPTGNTPPVI…HSGSYLVTSV (170 aa). Residue T2679 is modified to Phosphothreonine. A phosphoserine mark is found at S2710 and S2724. The disordered stretch occupies residues 2729-2843; that stretch reads DAPDQKGTEI…HSGSYLVTSV (115 aa). Over residues 2741–2757 the composition is skewed to polar residues; sequence GQNNPVPVSETNESSIV. The segment covering 2763 to 2774 has biased composition (low complexity); that stretch reads SSSSSSKHSSPS. Positions 2784–2812 are enriched in polar residues; sequence FNYNPSPRKSSADSTSARPSQIPTPVNNN. S2789 is modified (phosphoserine). Residues 2803–2806 carry the Microtubule tip localization signal motif; sequence SQIP. The PDZ-binding signature appears at 2841-2843; it reads TSV.

It belongs to the adenomatous polyposis coli (APC) family. As to quaternary structure, forms homooligomers. Found in a complex consisting of ARHGEF4, APC and CTNNB1. Found in a complex composed of MACF1, APC, AXIN1, CTNNB1 and GSK3B. The complex composed, at least, of APC, CTNNB1 and GSK3B interacts with JPT1; the interaction requires the inactive form of GSK3B (phosphorylated at 'Ser-9'). Interacts with APC2. Interacts with DLG1 (via PDZ domains) and DLG3 (via PDZ domains). Interacts with alpha- and beta-catenins. Interacts with AXIN1 (via RGS domain). Interacts with ARHGEF4 (via N-terminus). Interacts (via C-terminal residues 2674-2843) with MAPRE1 (via C-terminal residues 206-211); the interaction inhibits association with and bundling of F-actin. Interacts with MAPRE2 and MAPRE3 (via C-terminus). Interacts with DIAPH1; DIAPH1 acts as a scaffold protein for MAPRE1 and APC to stabilize microtubules and promote cell migration. Interacts with DIAPH2. Interacts with SCRIB; may mediate APC targeting to adherens junctions of epithelial cells. Interacts with SPATA13 (via N-terminus and SH3 domain). Interacts with ASAP1 (via SH3 domain). Interacts (at the cell membrane) with AMER1 and AMER2 (via ARM repeats). Interacts with KHDRBS1. Interacts with actin; binds both to F-actin and actin filament bundles. Post-translationally, phosphorylated; phosphorylation enhances the F-actin bundling activity. Phosphorylated by GSK3B. Ubiquitinated, leading to its degradation by the proteasome. Ubiquitination is facilitated by Axin. Deubiquitinated by ZRANB1/TRABID. As to expression, expressed in a variety of tissues: brain, small intestine, colon, thymus, skeletal muscle, heart, prostate, lung, spleen, ovary, testis kidney, placenta, blood and liver. Isoform 1A: Very strongly expressed in brain but has relatively low expression levels in other tissues. Isoform 1B: Predominant form in all tissues except for brain, including gastric mucosa and blood.

It localises to the cell junction. Its subcellular location is the adherens junction. It is found in the cytoplasm. The protein localises to the cytoskeleton. The protein resides in the cell projection. It localises to the lamellipodium. Its subcellular location is the ruffle membrane. It is found in the cell membrane. Its function is as follows. Tumor suppressor. Promotes rapid degradation of CTNNB1 and participates in Wnt signaling as a negative regulator. APC activity is correlated with its phosphorylation state. Activates the GEF activity of SPATA13 and ARHGEF4. Plays a role in hepatocyte growth factor (HGF)-induced cell migration. Required for MMP9 up-regulation via the JNK signaling pathway in colorectal tumor cells. Associates with both microtubules and actin filaments, components of the cytoskeleton. Plays a role in mediating the organization of F-actin into ordered bundles. Functions downstream of Rho GTPases and DIAPH1 to selectively stabilize microtubules. Acts as a mediator of ERBB2-dependent stabilization of microtubules at the cell cortex. It is required for the localization of MACF1 to the cell membrane and this localization of MACF1 is critical for its function in microtubule stabilization. The polypeptide is Adenomatous polyposis coli protein (Homo sapiens (Human)).